The sequence spans 309 residues: Malate dehydrogenase (309 aa).

Residues 9 to 14 (GAGAVG) and Asp-33 contribute to the NAD(+) site. Residues Arg-82 and Arg-88 each coordinate substrate. NAD(+) contacts are provided by residues Asn-95 and 118-120 (VTN). Substrate-binding residues include Asn-120 and Arg-151. The active-site Proton acceptor is His-175.

This sequence belongs to the LDH/MDH superfamily. MDH type 3 family.

The enzyme catalyses (S)-malate + NAD(+) = oxaloacetate + NADH + H(+). Catalyzes the reversible oxidation of malate to oxaloacetate. This Thermomicrobium roseum (strain ATCC 27502 / DSM 5159 / P-2) protein is Malate dehydrogenase.